A 1120-amino-acid chain; its full sequence is Topless-related protein 1 (1120 aa).

Positions 4–36 constitute a LisH domain; the sequence is LSRELVFLILQFLDEEKFKETVHKLEQESGFFF. One can recognise a CTLH domain in the interval 34–92; that stretch reads FFFNMKYFEDEVHNGNWDEVEKYLSGFTKVDDNRYSMKIFFEIRKQKYLEALDRHDRPK. Disordered regions lie at residues 210–235 and 283–307; these read ARAPSPVNNPLLGSLPKAEGFPPLGA and HPRTPPSNSAVDYPSGDSDHVSKRT. At Ser214 the chain carries Phosphoserine. WD repeat units lie at residues 353–393, 415–454, 460–501, 504–545, 548–591, 595–634, 639–678, 699–745, 755–794, 822–860, 863–903, 906–945, 999–1038, and 1052–1091; these read SQGS…RLVQ, EPVVSVNRVIWSPDGSLFGVAYSRHIVQLYSYHGGEDMRQ, AHVG…KRYT, GHEA…SRVD, APGR…VKRT, FHKRSLGVVQFDTTKNRYLAAGDDFSIKFWDMDTIQLLTA, GGLQASPRIRFNKEGSLLAVSANDNMIKVMANSDGLRLLH, ERPA…EPSQ, MRVTKISRLIFTNSGNAILALASNAIHLLWKWQRNDRNAT, NPEEAVPCFALSKNDSYVMSASGGKISLFNMMTFKTMAT, PPPP…VKSK, GHSKRITGLAFSNVLNVLVSSGADAQLCVWNTDGWEKQKS, ESAAPITHATFSCDSQLIYTSFMDATICVFSSANLRLRCR, and SNVHPLVIAAHPQESNMFAVGLSDGGVHIFEPLESEGKWG. Residues 1087–1120 form a disordered region; it reads EGKWGVAPPPENGSASAVTATPSVGASASDQPQR. A compositionally biased stretch (polar residues) spans 1099 to 1120; that stretch reads GSASAVTATPSVGASASDQPQR.

In terms of assembly, tetramer. Interacts with SNC1 (via TIR domain) and HDA19. Interacts with SPL (via EAR motif). Interacts with SPEAR3/TIE1. Binds to and corepresses GAF1/IDD2. As to expression, highly expressed in stamen primordium, microsporocyte, ovule primordium and megasporocyte during sporogenesis.

Its subcellular location is the nucleus. Functionally, transcriptional corepressor. Activates TIR-NB-LRR R protein-mediated immune responses through repression of negative regulators such as CNGC2/DND1. Negative regulator of jasmonate responses. In Arabidopsis thaliana (Mouse-ear cress), this protein is Topless-related protein 1 (TPR1).